Reading from the N-terminus, the 634-residue chain is Probable potassium transport system protein Kup (634 aa).

The next 12 membrane-spanning stretches (helical) occupy residues 19 to 39, 62 to 82, 113 to 133, 150 to 170, 177 to 197, 225 to 245, 259 to 279, 291 to 311, 349 to 369, 379 to 399, 406 to 426, and 431 to 451; these read AIGL…TSPL, VLSL…VIFV, FVVV…MITP, GLEH…FLIQ, IGIL…ALGV, IGVA…ALYA, WFLL…ATIL, LLAP…ATVI, IYIG…VLGF, YGVA…VVIW, LWLG…FFAA, and VIQG…LMST.

It belongs to the HAK/KUP transporter (TC 2.A.72) family.

The protein resides in the cell inner membrane. It catalyses the reaction K(+)(in) + H(+)(in) = K(+)(out) + H(+)(out). Its function is as follows. Transport of potassium into the cell. Likely operates as a K(+):H(+) symporter. In Pseudomonas aeruginosa (strain LESB58), this protein is Probable potassium transport system protein Kup.